Here is a 339-residue protein sequence, read N- to C-terminus: MRVYYDRDADLNLIKAKKVAVIGYGSQGRAHALNLKDSGAQNLVIALKAGSPTVKKAEADGFKVMTVAEAAGWADLMMMATPDELQADIYKADIAPNIRDGAAIAFAHGLNVHFGLIEPKASVDVVMIAPKGPGHTVRGEYQKGGGVPCLVAVHQNASGNALELALSYACGVGGGRSGIIETNFREECETDLFGEQVVLCGGLVELIRAGFETLTEAGYAPEMAYFECLHEVKLIVDLIYEGGIANMNYSISNTAEWGEYVTGPRIITEETKAEMKRVLKDIQTGKFTSEWMQEYRSGAARFKGIRRNNDSHQIEEVGAKLRGMMPWIGKNKLVDKSVN.

In terms of domain architecture, KARI N-terminal Rossmann spans 1 to 182; that stretch reads MRVYYDRDAD…GGGRSGIIET (182 aa). NADP(+) is bound by residues 24-27, K48, S51, T53, and 83-86; these read YGSQ and DELQ. H108 is a catalytic residue. Residue G134 coordinates NADP(+). In terms of domain architecture, KARI C-terminal knotted spans 183–328; it reads NFREECETDL…AKLRGMMPWI (146 aa). Positions 191, 195, 227, and 231 each coordinate Mg(2+). Substrate is bound at residue S252.

This sequence belongs to the ketol-acid reductoisomerase family. The cofactor is Mg(2+).

The catalysed reaction is (2R)-2,3-dihydroxy-3-methylbutanoate + NADP(+) = (2S)-2-acetolactate + NADPH + H(+). The enzyme catalyses (2R,3R)-2,3-dihydroxy-3-methylpentanoate + NADP(+) = (S)-2-ethyl-2-hydroxy-3-oxobutanoate + NADPH + H(+). It participates in amino-acid biosynthesis; L-isoleucine biosynthesis; L-isoleucine from 2-oxobutanoate: step 2/4. Its pathway is amino-acid biosynthesis; L-valine biosynthesis; L-valine from pyruvate: step 2/4. Functionally, involved in the biosynthesis of branched-chain amino acids (BCAA). Catalyzes an alkyl-migration followed by a ketol-acid reduction of (S)-2-acetolactate (S2AL) to yield (R)-2,3-dihydroxy-isovalerate. In the isomerase reaction, S2AL is rearranged via a Mg-dependent methyl migration to produce 3-hydroxy-3-methyl-2-ketobutyrate (HMKB). In the reductase reaction, this 2-ketoacid undergoes a metal-dependent reduction by NADPH to yield (R)-2,3-dihydroxy-isovalerate. This chain is Ketol-acid reductoisomerase (NADP(+)), found in Rhizobium etli (strain ATCC 51251 / DSM 11541 / JCM 21823 / NBRC 15573 / CFN 42).